Reading from the N-terminus, the 126-residue chain is Histone H2B type 1-J (126 aa).

Residues 1–12 (MPEPAKSAPAPK) are compositionally biased toward low complexity. Residues 1–35 (MPEPAKSAPAPKKGSKKAVTKAQKKDGKKRKRSRK) form a disordered region. Pro2 bears the N-acetylproline mark. Glu3 carries the ADP-ribosyl glutamic acid modification. Lys6 bears the N6-(2-hydroxyisobutyryl)lysine; alternate mark. An N6-(beta-hydroxybutyryl)lysine; alternate modification is found at Lys6. Residue Lys6 is modified to N6-acetyllysine; alternate. Residue Lys6 is modified to N6-butyryllysine; alternate. An N6-crotonyllysine; alternate modification is found at Lys6. At Lys6 the chain carries N6-lactoyllysine; alternate. Lys6 participates in a covalent cross-link: Glycyl lysine isopeptide (Lys-Gly) (interchain with G-Cter in SUMO2); alternate. An ADP-ribosylserine modification is found at Ser7. Lys12 is modified (N6-(beta-hydroxybutyryl)lysine; alternate). Residues Lys12 and Lys13 each carry the N6-acetyllysine; alternate modification. N6-crotonyllysine; alternate occurs at positions 12 and 13. The residue at position 12 (Lys12) is an N6-lactoyllysine; alternate. Lys13 is subject to N6-(2-hydroxyisobutyryl)lysine; alternate. Residue Ser15 is modified to Phosphoserine; by STK4/MST1. Residues Lys16, Lys17, Lys21, and Lys24 each carry the N6-acetyllysine; alternate modification. An N6-crotonyllysine; alternate mark is found at Lys16, Lys17, Lys21, and Lys24. Lys16, Lys17, Lys21, and Lys24 each carry N6-lactoyllysine; alternate. An N6-(beta-hydroxybutyryl)lysine; alternate mark is found at Lys17 and Lys21. Lys17 is subject to N6-glutaryllysine; alternate. N6-(2-hydroxyisobutyryl)lysine; alternate occurs at positions 21 and 24. Lys21 carries the post-translational modification N6-butyryllysine; alternate. Lys21 is covalently cross-linked (Glycyl lysine isopeptide (Lys-Gly) (interchain with G-Cter in SUMO2); alternate). An N6-(2-hydroxyisobutyryl)lysine modification is found at Lys25. Position 35 is an N6-(2-hydroxyisobutyryl)lysine; alternate (Lys35). N6-(beta-hydroxybutyryl)lysine; alternate is present on Lys35. Lys35 carries the N6-crotonyllysine; alternate modification. At Lys35 the chain carries N6-glutaryllysine; alternate. Residue Lys35 is modified to N6-succinyllysine; alternate. Lys35 is covalently cross-linked (Glycyl lysine isopeptide (Lys-Gly) (interchain with G-Cter in ubiquitin); alternate). Glu36 is modified (polyADP-ribosyl glutamic acid). Phosphoserine; by AMPK is present on Ser37. N6-(2-hydroxyisobutyryl)lysine; alternate occurs at positions 44, 47, and 58. The residue at position 44 (Lys44) is an N6-lactoyllysine; alternate. Residues Lys44 and Lys47 each carry the N6-glutaryllysine; alternate modification. At Lys47 the chain carries N6-methyllysine; alternate. An N6,N6-dimethyllysine; alternate modification is found at Lys58. Arg80 carries the post-translational modification Dimethylated arginine. Lys86 carries the N6-(2-hydroxyisobutyryl)lysine; alternate modification. Lys86 is subject to N6-(beta-hydroxybutyryl)lysine; alternate. N6-acetyllysine; alternate is present on Lys86. Lys86 carries the N6-lactoyllysine; alternate modification. The residue at position 86 (Lys86) is an N6,N6,N6-trimethyllysine; alternate. Omega-N-methylarginine is present on residues Arg87 and Arg93. An N6-(2-hydroxyisobutyryl)lysine; alternate modification is found at Lys109. Lys109 carries the post-translational modification N6-lactoyllysine; alternate. N6-glutaryllysine; alternate is present on Lys109. N6-methyllysine; alternate is present on Lys109. O-linked (GlcNAc) serine glycosylation is present at Ser113. Thr116 is modified (phosphothreonine). An N6-(2-hydroxyisobutyryl)lysine; alternate mark is found at Lys117 and Lys121. N6-(beta-hydroxybutyryl)lysine; alternate occurs at positions 117 and 121. N6-lactoyllysine; alternate occurs at positions 117 and 121. N6-glutaryllysine; alternate is present on residues Lys117 and Lys121. Lys117 and Lys121 each carry N6-succinyllysine; alternate. Residue Lys117 is modified to N6-malonyllysine; alternate. Lys117 is subject to N6-methylated lysine; alternate. A Glycyl lysine isopeptide (Lys-Gly) (interchain with G-Cter in ubiquitin); alternate cross-link involves residue Lys121.

This sequence belongs to the histone H2B family. In terms of assembly, the nucleosome is a histone octamer containing two molecules each of H2A, H2B, H3 and H4 assembled in one H3-H4 heterotetramer and two H2A-H2B heterodimers. The octamer wraps approximately 147 bp of DNA. Heterodimer H2BC11 and H2AZ1 interacts with VPS72 (via N-terminal domain). Monoubiquitination at Lys-35 (H2BK34Ub) by the MSL1/MSL2 dimer is required for histone H3 'Lys-4' (H3K4me) and 'Lys-79' (H3K79me) methylation and transcription activation at specific gene loci, such as HOXA9 and MEIS1 loci. Similarly, monoubiquitination at Lys-121 (H2BK120Ub) by the RNF20/40 complex gives a specific tag for epigenetic transcriptional activation and is also prerequisite for histone H3 'Lys-4' and 'Lys-79' methylation. It also functions cooperatively with the FACT dimer to stimulate elongation by RNA polymerase II. H2BK120Ub also acts as a regulator of mRNA splicing: deubiquitination by USP49 is required for efficient cotranscriptional splicing of a large set of exons. Post-translationally, phosphorylation at Ser-37 (H2BS36ph) by AMPK in response to stress promotes transcription. Phosphorylated on Ser-15 (H2BS14ph) by STK4/MST1 during apoptosis; which facilitates apoptotic chromatin condensation. Also phosphorylated on Ser-15 in response to DNA double strand breaks (DSBs), and in correlation with somatic hypermutation and immunoglobulin class-switch recombination. In terms of processing, glcNAcylation at Ser-113 promotes monoubiquitination of Lys-121. It fluctuates in response to extracellular glucose, and associates with transcribed genes. ADP-ribosylated by PARP1 or PARP2 on Ser-7 (H2BS6ADPr) in response to DNA damage. H2BS6ADPr promotes recruitment of CHD1L. Mono-ADP-ribosylated on Glu-3 (H2BE2ADPr) by PARP3 in response to single-strand breaks. Poly ADP-ribosylation on Glu-36 (H2BE35ADPr) by PARP1 regulates adipogenesis: it inhibits phosphorylation at Ser-37 (H2BS36ph), thereby blocking expression of pro-adipogenetic genes. Post-translationally, crotonylation (Kcr) is specifically present in male germ cells and marks testis-specific genes in post-meiotic cells, including X-linked genes that escape sex chromosome inactivation in haploid cells. Crotonylation marks active promoters and enhancers and confers resistance to transcriptional repressors. It is also associated with post-meiotically activated genes on autosomes. In terms of processing, lactylated in macrophages by EP300/P300 by using lactoyl-CoA directly derived from endogenous or exogenous lactate, leading to stimulates gene transcription.

It is found in the nucleus. The protein localises to the chromosome. Core component of nucleosome. Nucleosomes wrap and compact DNA into chromatin, limiting DNA accessibility to the cellular machineries which require DNA as a template. Histones thereby play a central role in transcription regulation, DNA repair, DNA replication and chromosomal stability. DNA accessibility is regulated via a complex set of post-translational modifications of histones, also called histone code, and nucleosome remodeling. In terms of biological role, has broad antibacterial activity. May contribute to the formation of the functional antimicrobial barrier of the colonic epithelium, and to the bactericidal activity of amniotic fluid. This chain is Histone H2B type 1-J, found in Homo sapiens (Human).